A 161-amino-acid chain; its full sequence is MTNSKGLRRGTRYMFARDFRKHGVEHLSTYYTQYKRGDLVDIKTNGAFQKGMPFKAYHGRTGRIFNVTRGAVGIIVNKRVRGNILPKRINIRIEHIKPSKCRTDFLNRVKSNDEKRKAAKSAGQPVPALKRLPVAPRGAHTVTTQNNEPELLAPLRFEIVA.

It belongs to the eukaryotic ribosomal protein eL21 family.

The polypeptide is Large ribosomal subunit protein eL21 (rpl-21) (Caenorhabditis elegans).